Reading from the N-terminus, the 2206-residue chain is Genome polyprotein (2206 aa).

Glycine 2 carries N-myristoyl glycine; by host lipidation. Residues 2-1517 lie on the Cytoplasmic side of the membrane; sequence GAQVSSQKVG…NINRAMTILQ (1516 aa). Amphipathic alpha-helix stretches follow at residues 579–599 and 579–603; these read GVDDLITEVAQNALALSLPKP and GVDDLITEVAQNALALSLPKPQSNL. Active-site for protease 2A activity residues include histidine 898 and aspartate 916. Cysteine 933 and cysteine 935 together coordinate Zn(2+). The For protease 2A activity role is filled by cysteine 987. The Zn(2+) site is built by cysteine 993 and histidine 995. Residues 1125–1197 are membrane-binding; it reads GDSWLKKFTE…HQSCPSQEHQ (73 aa). The segment at 1125-1263 is oligomerization; that stretch reads GDSWLKKFTE…SPGTGKSVAT (139 aa). The RNA-binding stretch occupies residues 1146 to 1150; sequence SNKIS. The SF3 helicase domain maps to 1229-1385; it reads EHTINNYIQF…SEYSRDGKLN (157 aa). ATP is bound at residue 1253-1260; sequence GSPGTGKS. The Zn(2+) site is built by cysteine 1393, cysteine 1396, cysteine 1405, and cysteine 1410. The segment at 1393–1410 adopts a C4-type zinc-finger fold; the sequence is CKNCHQPANFKRCCPLVC. The tract at residues 1437–1444 is RNA-binding; the sequence is EKNRRSNI. An oligomerization region spans residues 1448 to 1453; sequence MEALFQ. The stretch at 1518–1533 is an intramembrane region; the sequence is AVTTFAAVAGVVYVMY. At 1534–2206 the chain is on the cytoplasmic side; that stretch reads KLFAGHQGAY…TLYRRWLDSF (673 aa). At tyrosine 1543 the chain carries O-(5'-phospho-RNA)-tyrosine. The 179-residue stretch at 1563–1741 folds into the Peptidase C3 domain; it reads GPGFDYAVAM…FAAALKRSYF (179 aa). Active-site for protease 3C activity residues include histidine 1602, glutamate 1633, and cysteine 1709. One can recognise a RdRp catalytic domain in the interval 1972 to 2087; that stretch reads EKLFAFDYTG…SYPHEVDASL (116 aa). Residues aspartate 1978 and aspartate 2073 each contribute to the Mg(2+) site.

It belongs to the picornaviruses polyprotein family. As to quaternary structure, interacts with capsid protein VP1 and capsid protein VP3 to form heterotrimeric protomers. In terms of assembly, interacts with capsid protein VP0, and capsid protein VP3 to form heterotrimeric protomers. Interacts with human PVR. Five protomers subsequently associate to form pentamers which serve as building blocks for the capsid. Interacts with capsid protein VP2, capsid protein VP3 and capsid protein VP4 following cleavage of capsid protein VP0. Interacts with capsid protein VP1 and capsid protein VP3 in the mature capsid. As to quaternary structure, interacts with capsid protein VP0 and capsid protein VP1 to form heterotrimeric protomers. Five protomers subsequently associate to form pentamers which serve as building blocks for the capsid. Interacts with capsid protein VP4 in the mature capsid. Interacts with protein 2C; this interaction may be important for virion morphogenesis. In terms of assembly, interacts with capsid protein VP1 and capsid protein VP3. Homodimer. As to quaternary structure, homohexamer; forms a hexameric ring structure with 6-fold symmetry characteristic of AAA+ ATPases. Interacts (via N-terminus) with host RTN3 (via reticulon domain); this interaction is important for viral replication. Interacts with capsid protein VP3; this interaction may be important for virion morphogenesis. In terms of assembly, interacts with protein 3CD. Homodimer. Interacts with host GBF1. Interacts (via GOLD domain) with host ACBD3 (via GOLD domain); this interaction allows the formation of a viral protein 3A/ACBD3 heterotetramer with a 2:2 stoichiometry, which will stimulate the recruitment of host PI4KB in order to synthesize PI4P at the viral RNA replication sites. As to quaternary structure, interacts with RNA-directed RNA polymerase. In terms of assembly, interacts with protein 3AB and with RNA-directed RNA polymerase. Interacts with Viral protein genome-linked and with protein 3CD. It depends on Mg(2+) as a cofactor. Post-translationally, specific enzymatic cleavages in vivo by the viral proteases yield processing intermediates and the mature proteins. In terms of processing, myristoylation is required for the formation of pentamers during virus assembly. Further assembly of 12 pentamers and a molecule of genomic RNA generates the provirion. During virion maturation, immature virions are rendered infectious following cleavage of VP0 into VP4 and VP2. This maturation seems to be an autocatalytic event triggered by the presence of RNA in the capsid and it is followed by a conformational change infectious virion. Post-translationally, myristoylation is required during RNA encapsidation and formation of the mature virus particle. In terms of processing, VPg is uridylylated by the polymerase into VPg-pUpU. This acts as a nucleotide-peptide primer for the genomic RNA replication.

It is found in the virion. It localises to the host cytoplasm. The protein resides in the host cytoplasmic vesicle membrane. Its subcellular location is the host nucleus. The catalysed reaction is a ribonucleoside 5'-triphosphate + H2O = a ribonucleoside 5'-diphosphate + phosphate + H(+). It carries out the reaction Selective cleavage of Tyr-|-Gly bond in the picornavirus polyprotein.. It catalyses the reaction RNA(n) + a ribonucleoside 5'-triphosphate = RNA(n+1) + diphosphate. The enzyme catalyses Selective cleavage of Gln-|-Gly bond in the poliovirus polyprotein. In other picornavirus reactions Glu may be substituted for Gln, and Ser or Thr for Gly.. Its activity is regulated as follows. Replication or transcription is subject to high level of random mutations by the nucleotide analog ribavirin. Forms an icosahedral capsid of pseudo T=3 symmetry with capsid proteins VP2 and VP3. The capsid is 300 Angstroms in diameter, composed of 60 copies of each capsid protein and enclosing the viral positive strand RNA genome. Capsid protein VP1 mainly forms the vertices of the capsid. Capsid protein VP1 interacts with host cell receptor PVR to provide virion attachment to target host cells. This attachment induces virion internalization predominantly through clathrin- and caveolin-independent endocytosis in Hela cells and through caveolin-mediated endocytosis in brain microvascular endothelial cells. Tyrosine kinases are probably involved in the entry process. Virus binding to PVR induces increased junctional permeability and rearrangement of junctional proteins. Modulation of endothelial tight junctions, as well as cytolytic infection of endothelial cells themselves, may result in loss of endothelial integrity which may help the virus to reach the CNS. After binding to its receptor, the capsid undergoes conformational changes. Capsid protein VP1 N-terminus (that contains an amphipathic alpha-helix) and capsid protein VP4 are externalized. Together, they shape a pore in the host membrane through which viral genome is translocated to host cell cytoplasm. Functionally, forms an icosahedral capsid of pseudo T=3 symmetry with capsid proteins VP2 and VP3. The capsid is 300 Angstroms in diameter, composed of 60 copies of each capsid protein and enclosing the viral positive strand RNA genome. In terms of biological role, lies on the inner surface of the capsid shell. After binding to the host receptor, the capsid undergoes conformational changes. Capsid protein VP4 is released, Capsid protein VP1 N-terminus is externalized, and together, they shape a pore in the host membrane through which the viral genome is translocated into the host cell cytoplasm. Its function is as follows. Component of immature procapsids, which is cleaved into capsid proteins VP4 and VP2 after maturation. Allows the capsid to remain inactive before the maturation step. Cysteine protease that cleaves viral polyprotein and specific host proteins. It is responsible for the autocatalytic cleavage between the P1 and P2 regions, which is the first cleavage occurring in the polyprotein. Also cleaves the host translation initiation factor EIF4G1, in order to shut down the capped cellular mRNA translation. Inhibits the host nucleus-cytoplasm protein and RNA trafficking by cleaving host members of the nuclear pores including NUP98, NUP62 and NUP153. Counteracts stress granule formation probably by antagonizing its assembly or promoting its dissassembly. Cleaves and inhibits host IFIH1/MDA5, thereby inhibiting the type-I IFN production and the establishment of the antiviral state. Cleaves and inhibits host MAVS, thereby inhibiting the type-I IFN production and the establishment of the antiviral state. Functionally, plays an essential role in the virus replication cycle by acting as a viroporin. Creates a pore in the host endoplasmic reticulum and as a consequence releases Ca2+ in the cytoplasm of infected cell. In turn, high levels of cytoplasmic calcium may trigger membrane trafficking and transport of viral ER-associated proteins to viroplasms, sites of viral genome replication. In terms of biological role, induces and associates with structural rearrangements of intracellular membranes. Displays RNA-binding, nucleotide binding and NTPase activities. May play a role in virion morphogenesis and viral RNA encapsidation by interacting with the capsid protein VP3. Its function is as follows. Localizes the viral replication complex to the surface of membranous vesicles. Together with protein 3CD binds the Cis-Active RNA Element (CRE) which is involved in RNA synthesis initiation. Acts as a cofactor to stimulate the activity of 3D polymerase, maybe through a nucleid acid chaperone activity. Localizes the viral replication complex to the surface of membranous vesicles. It inhibits host cell endoplasmic reticulum-to-Golgi apparatus transport and causes the disassembly of the Golgi complex, possibly through GBF1 interaction. This would result in depletion of MHC, trail receptors and IFN receptors at the host cell surface. Plays an essential role in viral RNA replication by recruiting ACBD3 and PI4KB at the viral replication sites, thereby allowing the formation of the rearranged membranous structures where viral replication takes place. Functionally, acts as a primer for viral RNA replication and remains covalently bound to viral genomic RNA. VPg is uridylylated prior to priming replication into VPg-pUpU. The oriI viral genomic sequence may act as a template for this. The VPg-pUpU is then used as primer on the genomic RNA poly(A) by the RNA-dependent RNA polymerase to replicate the viral genome. During genome replication, the VPg-RNA linkage is removed by the host TDP2, thereby accelerating replication. During the late stage of the replication cycle, host TDP2 is excluded from sites of viral RNA synthesis and encapsidation, allowing for the generation of progeny virions. In terms of biological role, involved in the viral replication complex and viral polypeptide maturation. It exhibits protease activity with a specificity and catalytic efficiency that is different from protease 3C. Protein 3CD lacks polymerase activity. Protein 3CD binds to the 5'UTR of the viral genome. Its function is as follows. Major viral protease that mediates proteolytic processing of the polyprotein. Cleaves host EIF5B, contributing to host translation shutoff. Also cleaves host PABPC1, contributing to host translation shutoff. Cleaves host RIGI and thus contributes to the inhibition of type I interferon production. Cleaves host NLRP1, triggers host N-glycine-mediated degradation of the autoinhibitory NLRP1 N-terminal fragment. Inhibits the integrated stress response (ISR) in the infected cell by cleaving host G3BP1. Stress granule formation is thus inhibited, which allows protein synthesis and viral replication. Replicates the viral genomic RNA on the surface of intracellular membranes. May form linear arrays of subunits that propagate along a strong head-to-tail interaction called interface-I. Covalently attaches UMP to a tyrosine of VPg, which is used to prime RNA synthesis. The positive stranded RNA genome is first replicated at virus induced membranous vesicles, creating a dsRNA genomic replication form. This dsRNA is then used as template to synthesize positive stranded RNA genomes. ss(+)RNA genomes are either translated, replicated or encapsidated. The chain is Genome polyprotein from Poliovirus type 3 (strain 23127).